A 112-amino-acid polypeptide reads, in one-letter code: Tetracenomycin-F1 monooxygenase (112 aa).

Residues 11-100 (FTLVNVFGVA…SRPKPIFCEV (90 aa)) enclose the ABM domain.

Homotrimer.

It catalyses the reaction tetracenomycin F1 + O2 = tetracenomycin D3 + H2O + H(+). It participates in antibiotic biosynthesis; tetracenomycin C biosynthesis. Inhibited by p-chloromercuribenzoic acid, N-ethylmaleimide and diethyl pyrocarbonate. Oxygenase required for conversion of tetracenomycin F1 to tetracenomycin D3. The chain is Tetracenomycin-F1 monooxygenase (tcmH) from Streptomyces glaucescens.